A 549-amino-acid polypeptide reads, in one-letter code: Probable protein kinase UbiB (549 aa).

The 379-residue stretch at 123 to 501 (DFNEIPLASA…QQQAHKSNYL (379 aa)) folds into the Protein kinase domain. Residues 129–137 (LASASISQV) and K152 each bind ATP. Catalysis depends on D287, which acts as the Proton acceptor. 2 helical membrane passes run 496–516 (HKSN…TLLI) and 520–540 (ATLW…FVGW).

The protein belongs to the ABC1 family. UbiB subfamily.

Its subcellular location is the cell inner membrane. It participates in cofactor biosynthesis; ubiquinone biosynthesis [regulation]. Functionally, is probably a protein kinase regulator of UbiI activity which is involved in aerobic coenzyme Q (ubiquinone) biosynthesis. The polypeptide is Probable protein kinase UbiB (Shewanella baltica (strain OS223)).